The primary structure comprises 302 residues: MQFKRVKRNIDGVLLLDKPLGISSNQALQMVKRLYQAAKAGHTGSLDPLASGLLPICLGEATKFSHFLLDADKSYRALVTLGSTTTTGDVEGEIMTQAPVTVTQSELEAILQDMVGDILQVPPMYSALKHEGKALYAYAREGVEIPRKPRPVTIHAIALERFDGKQFEMVVSCSKGTYIRTLAEDIGSRLGCGAHLGGLRRLTTAHFNLKNAVTIEQLDQMSQAERDAVLLQVDAAIEDFPIVTLDADSAFYLLQGQEVWKSGLSISGLFRLYSEQGAFLGLGEQTSRGSIAPRRLLRQAGE.

Asp-47 (nucleophile) is an active-site residue.

It belongs to the pseudouridine synthase TruB family. Type 1 subfamily.

It carries out the reaction uridine(55) in tRNA = pseudouridine(55) in tRNA. In terms of biological role, responsible for synthesis of pseudouridine from uracil-55 in the psi GC loop of transfer RNAs. The chain is tRNA pseudouridine synthase B from Methylobacillus flagellatus (strain ATCC 51484 / DSM 6875 / VKM B-1610 / KT).